Here is a 570-residue protein sequence, read N- to C-terminus: Proline--tRNA ligase (570 aa).

Belongs to the class-II aminoacyl-tRNA synthetase family. ProS type 1 subfamily. In terms of assembly, homodimer.

It localises to the cytoplasm. It carries out the reaction tRNA(Pro) + L-proline + ATP = L-prolyl-tRNA(Pro) + AMP + diphosphate. Catalyzes the attachment of proline to tRNA(Pro) in a two-step reaction: proline is first activated by ATP to form Pro-AMP and then transferred to the acceptor end of tRNA(Pro). As ProRS can inadvertently accommodate and process non-cognate amino acids such as alanine and cysteine, to avoid such errors it has two additional distinct editing activities against alanine. One activity is designated as 'pretransfer' editing and involves the tRNA(Pro)-independent hydrolysis of activated Ala-AMP. The other activity is designated 'posttransfer' editing and involves deacylation of mischarged Ala-tRNA(Pro). The misacylated Cys-tRNA(Pro) is not edited by ProRS. This chain is Proline--tRNA ligase, found in Neisseria meningitidis serogroup B (strain ATCC BAA-335 / MC58).